Here is a 616-residue protein sequence, read N- to C-terminus: Male-specific lethal 1 homolog (616 aa).

The disordered stretch occupies residues 1–116; sequence MTMRSAVFKA…PPATKQAGIG (116 aa). The residue at position 66 (serine 66) is a Phosphoserine. A compositionally biased stretch (low complexity) spans 81 to 91; that stretch reads GLLLPAGAAPG. Serine 127 carries the phosphoserine modification. The interval 152 to 218 is disordered; that stretch reads TPWAGDKGGA…LGGGGGSGAS (67 aa). Residues 153-171 are compositionally biased toward low complexity; that stretch reads PWAGDKGGAAPPAATASDP. Positions 172 to 186 are enriched in pro residues; the sequence is AGPPPLPLPGPPPLA. The span at 187–196 shows a compositional bias: low complexity; it reads PTATAGTLAA. Serine 207 carries the phosphoserine modification. The stretch at 215-284 forms a coiled coil; sequence SGASSQAACL…RDNEKERHKL (70 aa). Positions 225–239 are interaction with MSL2; that stretch reads KQILLLQLDLIEQQQ. A Glycyl lysine isopeptide (Lys-Gly) (interchain with G-Cter in SUMO2) cross-link involves residue lysine 303. Positions 306–422 are disordered; the sequence is RQPELCETSQ…PKEKAFSSEM (117 aa). Residues 319-348 carry the Nuclear localization signal motif; that stretch reads SKPFSCGRSGKGHKRKTPFGNTERKTPVKK. N6-acetyllysine is present on lysine 355. Phosphothreonine is present on residues threonine 358 and threonine 360. Phosphoserine is present on serine 364. Residues lysine 367 and lysine 380 each participate in a glycyl lysine isopeptide (Lys-Gly) (interchain with G-Cter in SUMO2) cross-link. Residues 378 to 394 are compositionally biased toward basic and acidic residues; sequence VCKRELRSQETPEKPRS. Serine 385 is modified (phosphoserine). Threonine 388 is modified (phosphothreonine). A Phosphoserine modification is found at serine 395. Positions 395 to 409 are enriched in polar residues; sequence SVDTPPRLSTPQKGP. Phosphothreonine is present on residues threonine 398 and threonine 404. A phosphoserine mark is found at serine 444, serine 452, and serine 484. One can recognise a PEHE domain in the interval 474–593; it reads VLAVPSWRDH…LAPQNFELPW (120 aa). An interaction with KAT8 HAT domain region spans residues 498-516; sequence ENLDDSVFSKRHAKLELDE. The short motif at 507-521 is the Bipartite nuclear localization signal element; it reads KRHAKLELDEKRRKR. The interval 552–593 is interaction with MSL3 MRG domain; the sequence is EVTSFFPEPDDVESLLITPFLPVVAFGRPLPKLAPQNFELPW.

The protein belongs to the msl-1 family. As to quaternary structure, component of a multisubunit histone acetyltransferase complex (MSL) at least composed of the KAT8/MOF/MYST1, MSL1/hampin, MSL2 and MSL3. Interacts (via PEHE domain) with KAT8 (via HAT domain) and MSL3 (via MRG domain); both interactions are direct. Directly interacts with MSL2 via its coiled coil domain. Directly interacts with NUPR1. Interacts with TP53BP1; this interaction may be required for MSL1 DNA repair activity, but not for histone acetyltransferase activity. Forms a MSL heterotetrameric core with MSL2. Isoform 1 and isoform 3 interact with TTC4. Isoform 1 interacts with ECM2 and PIHD1. Sumoylated with SUMO1. In terms of tissue distribution, isoform 3 and isoform 5 are testis-specific. Isoform 1 and isoform 4 are ubiquitously expressed. Isoform 2 is expressed at low levels in the testis and brain.

It is found in the nucleus. Its subcellular location is the nucleus speckle. The protein localises to the nucleoplasm. In terms of biological role, non-catalytic component of the MSL histone acetyltransferase complex, a multiprotein complex that mediates the majority of histone H4 acetylation at 'Lys-16' (H4K16ac), an epigenetic mark that prevents chromatin compaction. The MSL complex is required for chromosome stability and genome integrity by maintaining homeostatic levels of H4K16ac. The MSL complex is also involved in gene dosage by promoting up-regulation of genes expressed by the X chromosome. X up-regulation is required to compensate for autosomal biallelic expression. The MSL complex also participates in gene dosage compensation by promoting expression of Tsix non-coding RNA. Within the MSL complex, acts as a scaffold to tether MSL3 and KAT8 together for enzymatic activity regulation. Greatly enhances MSL2 E3 ubiquitin ligase activity, promoting monoubiquitination of histone H2B at 'Lys-34' (H2BK34Ub). This modification in turn stimulates histone H3 methylation at 'Lys-4' (H3K4me) and 'Lys-79' (H3K79me) and leads to gene activation, including that of HOXA9 and MEIS1. This chain is Male-specific lethal 1 homolog, found in Mus musculus (Mouse).